A 412-amino-acid polypeptide reads, in one-letter code: Serine hydroxymethyltransferase (412 aa).

(6S)-5,6,7,8-tetrahydrofolate contacts are provided by residues Leu117 and 121-123; that span reads GHL. Position 226 is an N6-(pyridoxal phosphate)lysine (Lys226). 349 to 351 lines the (6S)-5,6,7,8-tetrahydrofolate pocket; that stretch reads SPF.

The protein belongs to the SHMT family. In terms of assembly, homodimer. Pyridoxal 5'-phosphate serves as cofactor.

Its subcellular location is the cytoplasm. The enzyme catalyses (6R)-5,10-methylene-5,6,7,8-tetrahydrofolate + glycine + H2O = (6S)-5,6,7,8-tetrahydrofolate + L-serine. Its pathway is one-carbon metabolism; tetrahydrofolate interconversion. The protein operates within amino-acid biosynthesis; glycine biosynthesis; glycine from L-serine: step 1/1. In terms of biological role, catalyzes the reversible interconversion of serine and glycine with tetrahydrofolate (THF) serving as the one-carbon carrier. This reaction serves as the major source of one-carbon groups required for the biosynthesis of purines, thymidylate, methionine, and other important biomolecules. Also exhibits THF-independent aldolase activity toward beta-hydroxyamino acids, producing glycine and aldehydes, via a retro-aldol mechanism. This Nitratidesulfovibrio vulgaris (strain DSM 19637 / Miyazaki F) (Desulfovibrio vulgaris) protein is Serine hydroxymethyltransferase.